Here is a 671-residue protein sequence, read N- to C-terminus: DNA ligase (671 aa).

NAD(+) contacts are provided by residues 31-35 (DAEYD), 80-81 (SL), and Glu110. Catalysis depends on Lys112, which acts as the N6-AMP-lysine intermediate. Arg133, Glu167, Lys283, and Lys307 together coordinate NAD(+). Residues Cys401, Cys404, Cys419, and Cys424 each contribute to the Zn(2+) site. The BRCT domain maps to 587–671 (EEELVFAGKT…YLPDEGGLNE (85 aa)).

It belongs to the NAD-dependent DNA ligase family. LigA subfamily. Requires Mg(2+) as cofactor. Mn(2+) is required as a cofactor.

It catalyses the reaction NAD(+) + (deoxyribonucleotide)n-3'-hydroxyl + 5'-phospho-(deoxyribonucleotide)m = (deoxyribonucleotide)n+m + AMP + beta-nicotinamide D-nucleotide.. DNA ligase that catalyzes the formation of phosphodiester linkages between 5'-phosphoryl and 3'-hydroxyl groups in double-stranded DNA using NAD as a coenzyme and as the energy source for the reaction. It is essential for DNA replication and repair of damaged DNA. The chain is DNA ligase from Listeria innocua serovar 6a (strain ATCC BAA-680 / CLIP 11262).